The chain runs to 139 residues: uncharacterized protein (139 aa).

The VOC domain occupies 9–133 (QAAQIRIARP…DGWRIVFMNS (125 aa)).

This is an uncharacterized protein from Bacillus subtilis (strain 168).